A 344-amino-acid chain; its full sequence is Heat-inducible transcription repressor HrcA (344 aa).

Belongs to the HrcA family.

Its function is as follows. Negative regulator of class I heat shock genes (grpE-dnaK-dnaJ and groELS operons). Prevents heat-shock induction of these operons. In Streptococcus pyogenes serotype M6 (strain ATCC BAA-946 / MGAS10394), this protein is Heat-inducible transcription repressor HrcA.